The sequence spans 411 residues: SH3 and cysteine-rich domain-containing protein 2 (411 aa).

Residues 1-29 (MTEMSEKENEPDDAATHSPPGTVSALQET) form a disordered region. Residues 19-29 (PPGTVSALQET) show a composition bias toward polar residues. Phosphoserine is present on S48. The tract at residues 64–95 (TEVLLTPPTPLPPPSPPPTASDRGLATPSPSP) is disordered. Over residues 70–82 (PPTPLPPPSPPPT) the composition is skewed to pro residues. The Phorbol-ester/DAG-type zinc finger occupies 110 to 161 (LHSFQEHVFKRASPCELCHQLIVGNSKQGLRCKMCKVSVHLWCSEEISHQQC). Disordered stretches follow at residues 174–203 (SSPLLVHEPPPVCATSKESPPTGDSGKVDP) and 219–288 (RSSF…ATLR). Residues 219–232 (RSSFSSTSESPTRS) are compositionally biased toward low complexity. 2 SH3 domains span residues 292-351 (GPMY…RVRP) and 354-411 (NVWR…LTEI).

As to quaternary structure, interacts (via SH3 domains) with CACNA1S. Interacts (via SH3 domains) with CACNA1C. Has much lower affinity for CACNA1C than for CACNA1S.

It localises to the cytoplasm. The protein resides in the cytosol. The protein localises to the cell membrane. It is found in the sarcolemma. Its function is as follows. Plays a redundant role in promoting the expression of calcium channel CACNA1S at the cell membrane, and thereby contributes to increased channel activity. Slows down the inactivation rate of the calcium channel CACNA1C. The polypeptide is SH3 and cysteine-rich domain-containing protein 2 (STAC2) (Homo sapiens (Human)).